Here is a 120-residue protein sequence, read N- to C-terminus: Large ribosomal subunit protein bL20c (120 aa).

It belongs to the bacterial ribosomal protein bL20 family.

The protein resides in the plastid. Its function is as follows. Binds directly to 23S ribosomal RNA and is necessary for the in vitro assembly process of the 50S ribosomal subunit. It is not involved in the protein synthesizing functions of that subunit. The chain is Large ribosomal subunit protein bL20c (rpl20) from Cuscuta gronovii (Common dodder).